A 284-amino-acid chain; its full sequence is Steroidogenic acute regulatory protein, mitochondrial (284 aa).

The N-terminal 62 residues, methionine 1 to leucine 62, are a transit peptide targeting the mitochondrion. Residues serine 56 and serine 194 each carry the phosphoserine; by PKA modification. Residues leucine 66 to alanine 279 form the START domain.

May interact with TSPO. Expressed within glia and neurons in discrete regions of the brain.

It localises to the mitochondrion. The enzyme catalyses cholesterol(in) = cholesterol(out). The protein operates within steroid metabolism; cholesterol metabolism. Plays a key role in steroid hormone synthesis by enhancing the metabolism of cholesterol into pregnenolone. Transporter that binds to and transport cholesterol through the intermembrane space of the mitochondrion. In Mus musculus (Mouse), this protein is Steroidogenic acute regulatory protein, mitochondrial (Star).